The sequence spans 219 residues: Large ribosomal subunit protein bL25 (219 aa).

Positions 176–219 are disordered; sequence VTVVPPTDEPSEEEVEAMEGESATEEPEVVGEDKEDDEEENKED. Residues 184-219 are compositionally biased toward acidic residues; sequence EPSEEEVEAMEGESATEEPEVVGEDKEDDEEENKED.

Belongs to the bacterial ribosomal protein bL25 family. CTC subfamily. As to quaternary structure, part of the 50S ribosomal subunit; part of the 5S rRNA/L5/L18/L25 subcomplex. Contacts the 5S rRNA. Binds to the 5S rRNA independently of L5 and L18.

In terms of biological role, this is one of the proteins that binds to the 5S RNA in the ribosome where it forms part of the central protuberance. In Staphylococcus epidermidis (strain ATCC 35984 / DSM 28319 / BCRC 17069 / CCUG 31568 / BM 3577 / RP62A), this protein is Large ribosomal subunit protein bL25.